A 399-amino-acid polypeptide reads, in one-letter code: Integral membrane protein GPR137B (399 aa).

A disordered region spans residues 1–22; it reads MRPERPRPRGSAPGPMETPPWD. The Lumenal portion of the chain corresponds to 1-46; it reads MRPERPRPRGSAPGPMETPPWDPARNDSLPPTLTPAVPPYVKLGLT. A glycan (N-linked (GlcNAc...) asparagine) is linked at Asn26. Residues 47 to 67 form a helical membrane-spanning segment; sequence VVYTVFYALLFVFIYVQLWLV. The Cytoplasmic segment spans residues 68–79; the sequence is LRYRHKRLSYQS. The chain crosses the membrane as a helical span at residues 80 to 100; the sequence is VFLFLCLFWASLRTVLFSFYF. Residues 101–111 are Lumenal-facing; it reads KDFVAANSLSP. Residues 112–132 traverse the membrane as a helical segment; the sequence is FVFWLLYCFPVCLQFFTLTLM. Over 133–159 the chain is Cytoplasmic; sequence NLYFTQVIFKAKSKYSPELLKYRLPLY. The helical transmembrane segment at 160-180 threads the bilayer; sequence LASLFISLVFLLVNLTCAVLV. Over 181–188 the chain is Lumenal; the sequence is KTGNWERK. The chain crosses the membrane as a helical span at residues 189–209; it reads VIVSVRVAINDTLFVLCAVSL. Residues 210-237 are Cytoplasmic-facing; sequence SICLYKISKMSLANIYLESKGSSVCQVT. Residues 238 to 258 traverse the membrane as a helical segment; that stretch reads AIGVTVILLYTSRACYNLFIL. Topologically, residues 259-292 are lumenal; the sequence is SFSQNKSVHSFDYDWYNVSDQADLKNQLGDAGYV. Asn263 and Asn275 each carry an N-linked (GlcNAc...) asparagine glycan. Residues 293 to 313 traverse the membrane as a helical segment; it reads LFGVVLFVWELLPTTLVVYFF. The Cytoplasmic segment spans residues 314–399; sequence RVRNPTKDLT…TLDPDKPSLG (86 aa).

This sequence belongs to the GPR137 family. In terms of assembly, interaction with RRAGA; increases RRAGA recruitment to lysosomes. Interacts with MTOR; this interaction is amino acid sensitive. As to expression, expressed in kidney, heart, brain and placenta.

Its subcellular location is the lysosome membrane. In terms of biological role, lysosomal integral membrane protein that regulates the localization and activity of mTORC1, a signaling complex promoting cell growth in response to growth factors, energy levels, and amino acids. Interacts with Rag GTPases and increases the lysosomial localization and activity of Rag GTPases and thereby regulates mTORC1 translocation and activity in lysosome. Involved in the regulation of lysosomal morphology and autophagy. Functionally, also acts as a negative regulator of osteoclast activity. Involved in interleukin-4-induced M2 macrophage polarization. This Homo sapiens (Human) protein is Integral membrane protein GPR137B (GPR137B).